Here is a 325-residue protein sequence, read N- to C-terminus: ATP synthase gamma chain (325 aa).

The protein belongs to the ATPase gamma chain family. As to quaternary structure, F-type ATPases have 2 components, CF(1) - the catalytic core - and CF(0) - the membrane proton channel. CF(1) has five subunits: alpha(3), beta(3), gamma(1), delta(1), epsilon(1). CF(0) has three main subunits: a, b and c.

Its subcellular location is the cell membrane. In terms of biological role, produces ATP from ADP in the presence of a proton gradient across the membrane. The gamma chain is believed to be important in regulating ATPase activity and the flow of protons through the CF(0) complex. The chain is ATP synthase gamma chain from Corynebacterium glutamicum (strain R).